Consider the following 385-residue polypeptide: Non-structural maintenance of chromosomes element 4 homolog A (385 aa).

Residues M1–D69 are disordered. Composition is skewed to basic and acidic residues over residues P10–R21 and S42–L55. A compositionally biased stretch (acidic residues) spans E56 to M68. T345 is modified (phosphothreonine). Position 377 is a phosphoserine (S377).

This sequence belongs to the NSE4 family. As to quaternary structure, component of the SMC5-SMC6 complex which consists at least of SMC5, SMC6, NSMCE2, NSMCE1, NSMCE4A or EID3 and NSMCE3. NSMCE1, NSMCE4A or EID3 and NSMCE3 probably form a subcomplex that bridges the head domains of the SMC5:SMC6 heterodimer. Interacts with NSMCE3.

The protein localises to the nucleus. It localises to the chromosome. It is found in the telomere. Component of the SMC5-SMC6 complex, a complex involved in DNA double-strand breaks by homologous recombination. The complex may promote sister chromatid homologous recombination by recruiting the SMC1-SMC3 cohesin complex to double-strand breaks. The complex is required for telomere maintenance via recombination in ALT (alternative lengthening of telomeres) cell lines and mediates sumoylation of shelterin complex (telosome) components which is proposed to lead to shelterin complex disassembly in ALT-associated PML bodies (APBs). Is involved in positive regulation of response to DNA damage stimulus. The protein is Non-structural maintenance of chromosomes element 4 homolog A (NSMCE4A) of Homo sapiens (Human).